Reading from the N-terminus, the 315-residue chain is Methenyltetrahydromethanopterin cyclohydrolase (315 aa).

The protein belongs to the MCH family.

Its subcellular location is the cytoplasm. The catalysed reaction is 5,10-methenyl-5,6,7,8-tetrahydromethanopterin + H2O = N(5)-formyl-5,6,7,8-tetrahydromethanopterin + H(+). It participates in one-carbon metabolism; methanogenesis from CO(2); 5,10-methenyl-5,6,7,8-tetrahydromethanopterin from CO(2): step 3/3. In terms of biological role, catalyzes the reversible interconversion of 5-formyl-H(4)MPT to methenyl-H(4)MPT(+). The chain is Methenyltetrahydromethanopterin cyclohydrolase from Methanoculleus marisnigri (strain ATCC 35101 / DSM 1498 / JR1).